A 71-amino-acid chain; its full sequence is UPF0346 protein BcerKBAB4_2120 (71 aa).

This sequence belongs to the UPF0346 family.

The polypeptide is UPF0346 protein BcerKBAB4_2120 (Bacillus mycoides (strain KBAB4) (Bacillus weihenstephanensis)).